Reading from the N-terminus, the 334-residue chain is Formamidase (334 aa).

A CN hydrolase domain is found at 14–260 (FLVAAIQFPV…WEIVTGEIYP (247 aa)). Glu-60 serves as the catalytic Proton acceptor. Lys-133 acts as the Proton donor in catalysis. Cys-166 serves as the catalytic Nucleophile.

The protein belongs to the carbon-nitrogen hydrolase superfamily. Aliphatic amidase family.

The enzyme catalyses formamide + H2O = formate + NH4(+). Is an aliphatic amidase with a restricted substrate specificity, as it only hydrolyzes formamide. This Helicobacter pylori (strain Shi470) protein is Formamidase.